We begin with the raw amino-acid sequence, 399 residues long: Elongation factor Tu (399 aa).

In terms of domain architecture, tr-type G spans 10–209; the sequence is KPHVNVGTIG…EVDKYIPTPQ (200 aa). Positions 19–26 are G1; sequence GHVDHGKT. GTP is bound at residue 19–26; the sequence is GHVDHGKT. T26 serves as a coordination point for Mg(2+). Positions 60-64 are G2; that stretch reads GITIA. Residues 81 to 84 are G3; it reads DCPG. GTP is bound by residues 81–85 and 136–139; these read DCPGH and NKQD. Positions 136–139 are G4; sequence NKQD. Residues 174–176 are G5; sequence SAL.

This sequence belongs to the TRAFAC class translation factor GTPase superfamily. Classic translation factor GTPase family. EF-Tu/EF-1A subfamily. Monomer.

Its subcellular location is the cytoplasm. The enzyme catalyses GTP + H2O = GDP + phosphate + H(+). GTP hydrolase that promotes the GTP-dependent binding of aminoacyl-tRNA to the A-site of ribosomes during protein biosynthesis. The protein is Elongation factor Tu of Helicobacter hepaticus (strain ATCC 51449 / 3B1).